The primary structure comprises 529 residues: Bifunctional purine biosynthesis protein PurH (529 aa).

One can recognise an MGS-like domain in the interval 1 to 148; that stretch reads MQQRRPVRRA…KNHKDVAIVV (148 aa). At Lys287 the chain carries N6-acetyllysine.

The protein belongs to the PurH family.

It catalyses the reaction (6R)-10-formyltetrahydrofolate + 5-amino-1-(5-phospho-beta-D-ribosyl)imidazole-4-carboxamide = 5-formamido-1-(5-phospho-D-ribosyl)imidazole-4-carboxamide + (6S)-5,6,7,8-tetrahydrofolate. The enzyme catalyses IMP + H2O = 5-formamido-1-(5-phospho-D-ribosyl)imidazole-4-carboxamide. The protein operates within purine metabolism; IMP biosynthesis via de novo pathway; 5-formamido-1-(5-phospho-D-ribosyl)imidazole-4-carboxamide from 5-amino-1-(5-phospho-D-ribosyl)imidazole-4-carboxamide (10-formyl THF route): step 1/1. It functions in the pathway purine metabolism; IMP biosynthesis via de novo pathway; IMP from 5-formamido-1-(5-phospho-D-ribosyl)imidazole-4-carboxamide: step 1/1. This Escherichia coli (strain SMS-3-5 / SECEC) protein is Bifunctional purine biosynthesis protein PurH.